Here is a 445-residue protein sequence, read N- to C-terminus: Trigger factor (445 aa).

The 86-residue stretch at 162-247 (GDQVTIDAIG…IKAVHTAEPT (86 aa)) folds into the PPIase FKBP-type domain.

It belongs to the FKBP-type PPIase family. Tig subfamily.

It localises to the cytoplasm. The catalysed reaction is [protein]-peptidylproline (omega=180) = [protein]-peptidylproline (omega=0). Involved in protein export. Acts as a chaperone by maintaining the newly synthesized protein in an open conformation. Functions as a peptidyl-prolyl cis-trans isomerase. The chain is Trigger factor from Rickettsia massiliae (strain Mtu5).